The sequence spans 751 residues: Catalase-peroxidase (751 aa).

Positions 1–21 are disordered; the sequence is MSNESKCPFHQTAGGGTTNRD. Residues 90–244 constitute a cross-link (tryptophyl-tyrosyl-methioninium (Trp-Tyr) (with M-270)); the sequence is WHSAGTYRIG…LAAVQMGLIY (155 aa). His-91 serves as the catalytic Proton acceptor. The tract at residues 195-227 is disordered; it reads YGKDQVKAQPPGQGDLVAEPAKHGEEQNRDLSA. Positions 214–227 are enriched in basic and acidic residues; the sequence is PAKHGEEQNRDLSA. The segment at residues 244 to 270 is a cross-link (tryptophyl-tyrosyl-methioninium (Tyr-Met) (with W-90)); sequence YVNPEGPEGNPDPVASGKDIRETFGRM. Heme b is bound at residue His-285. Positions 365–387 are disordered; the sequence is AHQWRPKEGKGAGTVPDAHDPGK.

It belongs to the peroxidase family. Peroxidase/catalase subfamily. In terms of assembly, homodimer or homotetramer. Heme b is required as a cofactor. Post-translationally, formation of the three residue Trp-Tyr-Met cross-link is important for the catalase, but not the peroxidase activity of the enzyme.

It catalyses the reaction H2O2 + AH2 = A + 2 H2O. The catalysed reaction is 2 H2O2 = O2 + 2 H2O. Bifunctional enzyme with both catalase and broad-spectrum peroxidase activity. The sequence is that of Catalase-peroxidase from Pseudomonas putida (strain ATCC 700007 / DSM 6899 / JCM 31910 / BCRC 17059 / LMG 24140 / F1).